Here is a 293-residue protein sequence, read N- to C-terminus: UDP-3-O-acyl-N-acetylglucosamine deacetylase (293 aa).

Zn(2+) is bound by residues H79, H236, and D240. The active-site Proton donor is the H263.

It belongs to the LpxC family. It depends on Zn(2+) as a cofactor.

It catalyses the reaction a UDP-3-O-[(3R)-3-hydroxyacyl]-N-acetyl-alpha-D-glucosamine + H2O = a UDP-3-O-[(3R)-3-hydroxyacyl]-alpha-D-glucosamine + acetate. Its pathway is glycolipid biosynthesis; lipid IV(A) biosynthesis; lipid IV(A) from (3R)-3-hydroxytetradecanoyl-[acyl-carrier-protein] and UDP-N-acetyl-alpha-D-glucosamine: step 2/6. Its function is as follows. Catalyzes the hydrolysis of UDP-3-O-myristoyl-N-acetylglucosamine to form UDP-3-O-myristoylglucosamine and acetate, the committed step in lipid A biosynthesis. The sequence is that of UDP-3-O-acyl-N-acetylglucosamine deacetylase from Phenylobacterium zucineum (strain HLK1).